The sequence spans 393 residues: PPE family protein PPE26 (393 aa).

It belongs to the mycobacterial PPE family. As to quaternary structure, interacts with human TLR2.

Functionally, probably plays a key role in regulating innate and adaptive immune responses through human Toll-like receptor 2 (TLR2). Interacts with TLR2, leading to the subsequent activation of the mitogen-activated protein kinase (MAPK) and nuclear factor kappa B (NF-kappa-B) signaling pathways. Stimulates macrophage activation by augmenting pro-inflammatory cytokine production (TNF-alpha, IL-6 and IL-12p40) and the expression of cell surface molecules (CD80, CD86, MHC class I and II). Also participates in adaptive immunity by directing Th1-polarised immune responses. The chain is PPE family protein PPE26 from Mycobacterium tuberculosis (strain ATCC 25618 / H37Rv).